A 269-amino-acid chain; its full sequence is Protein tio (269 aa).

Over residues 1–12 (MANEPQEHEEGK) the composition is skewed to basic and acidic residues. The tract at residues 1–127 (MANEPQEHEE…NETKCPDEQN (127 aa)) is disordered. At 1 to 246 (MANEPQEHEE…VEKKLTCVIC (246 aa)) the chain is on the cytoplasmic side. Residues 27–41 (PNIPQDPTPGTPPGP) are compositionally biased toward pro residues. Residues 61-74 (SEGPPDGSGNSSPP) show a composition bias toward low complexity. 2 stretches are compositionally biased toward polar residues: residues 91 to 101 (SESGGNNSAPN) and 114 to 127 (AGNGNETKCPDEQN). Tyr136 carries the post-translational modification Phosphotyrosine; by host LCK. The segment at 158 to 167 (EEERSPFNKY) is CSKH/LBD2. The SH3B/LBD1 stretch occupies residues 186-195 (IPPPQLPPRP). The chain crosses the membrane as a helical span at residues 247–267 (LLIGILVLLILLFMLGFLFLL). Over 268-269 (MK) the chain is Extracellular.

As to quaternary structure, homodimer. Binds SH3 domain of host LYN, HCK, LCK, SRC, FYN or YES. When tyrosine-phosphorylated, binds to the SH2 domain of host LCK, SRC, or FYN. Post-translationally, phosphorylated by host LCK, SRC and less efficiently by FYN.

The protein resides in the host cell membrane. Its function is as follows. Transforms host T-cells, inducing T-cell lymphomia in the host. Activates at least SRC and LCK tyrosines kinases, thereby activating signaling pathway transforming host T-cells. Human T-cells transformed ex vivo display a IL2 indenpendent growth phenotype. The chain is Protein tio from Ateles (AtHV-3).